Reading from the N-terminus, the 1405-residue chain is DNA-directed RNA polymerase subunit beta' (1405 aa).

Residues C70, C72, C85, and C88 each contribute to the Zn(2+) site. Mg(2+) contacts are provided by D460, D462, and D464. 4 residues coordinate Zn(2+): C815, C890, C897, and C900.

This sequence belongs to the RNA polymerase beta' chain family. In terms of assembly, the RNAP catalytic core consists of 2 alpha, 1 beta, 1 beta' and 1 omega subunit. When a sigma factor is associated with the core the holoenzyme is formed, which can initiate transcription. The cofactor is Mg(2+). Zn(2+) is required as a cofactor.

The catalysed reaction is RNA(n) + a ribonucleoside 5'-triphosphate = RNA(n+1) + diphosphate. DNA-dependent RNA polymerase catalyzes the transcription of DNA into RNA using the four ribonucleoside triphosphates as substrates. This is DNA-directed RNA polymerase subunit beta' from Xanthomonas campestris pv. campestris (strain 8004).